The following is a 220-amino-acid chain: Adenylate kinase (220 aa).

13-18 (GAGKGT) contributes to the ATP binding site. The tract at residues 33–62 (ATGDMLRSQVARQTELGKEAKKIMDQGGLV) is NMP. AMP contacts are provided by residues Thr34, Arg39, 60–62 (GLV), 89–92 (GFPR), and Gln96. The segment at 130 to 167 (GRLVHPGSGRSYHLEFNPPKVPMKDDVTGEPLIQRSDD) is LID. ATP-binding positions include Arg131 and 140–141 (SY). Arg164 and Arg175 together coordinate AMP. Gln203 provides a ligand contact to ATP.

This sequence belongs to the adenylate kinase family. AK2 subfamily. As to quaternary structure, monomer.

Its subcellular location is the cytoplasm. It is found in the cytosol. The protein resides in the mitochondrion intermembrane space. It localises to the nucleus. The catalysed reaction is AMP + ATP = 2 ADP. In terms of biological role, catalyzes the reversible transfer of the terminal phosphate group between ATP and AMP. Plays an important role in cellular energy homeostasis and in adenine nucleotide metabolism. Adenylate kinase activity is critical for regulation of the phosphate utilization and the AMP de novo biosynthesis pathways. The polypeptide is Adenylate kinase (adk1) (Schizosaccharomyces pombe (strain 972 / ATCC 24843) (Fission yeast)).